The sequence spans 259 residues: PKHD-type hydroxylase PsycPRwf_1523 (259 aa).

Residues 80-180 (VIMPPLFSAY…RLAMVTWVQS (101 aa)) form the Fe2OG dioxygenase domain. Positions 98, 100, and 161 each coordinate Fe cation. Arginine 171 is a binding site for 2-oxoglutarate.

The cofactor is Fe(2+). L-ascorbate serves as cofactor.

The polypeptide is PKHD-type hydroxylase PsycPRwf_1523 (Psychrobacter sp. (strain PRwf-1)).